The sequence spans 353 residues: Phospho-N-acetylmuramoyl-pentapeptide-transferase (353 aa).

A run of 10 helical transmembrane segments spans residues 22 to 42, 65 to 85, 88 to 108, 129 to 149, 161 to 181, 192 to 212, 228 to 248, 256 to 276, 281 to 301, and 330 to 350; these read FAFF…ITWA, TPTM…LSCI, DNIF…IGLI, LLTQ…SSEL, PLFD…ISSS, GLAT…LYLS, GLGE…GFLW, VFMG…LAII, ILLL…ILQV, and KIIV…LASI.

It belongs to the glycosyltransferase 4 family. MraY subfamily. It depends on Mg(2+) as a cofactor.

Its subcellular location is the cell inner membrane. The enzyme catalyses UDP-N-acetyl-alpha-D-muramoyl-L-alanyl-gamma-D-glutamyl-meso-2,6-diaminopimeloyl-D-alanyl-D-alanine + di-trans,octa-cis-undecaprenyl phosphate = di-trans,octa-cis-undecaprenyl diphospho-N-acetyl-alpha-D-muramoyl-L-alanyl-D-glutamyl-meso-2,6-diaminopimeloyl-D-alanyl-D-alanine + UMP. Its pathway is cell wall biogenesis; peptidoglycan biosynthesis. Functionally, catalyzes the initial step of the lipid cycle reactions in the biosynthesis of the cell wall peptidoglycan: transfers peptidoglycan precursor phospho-MurNAc-pentapeptide from UDP-MurNAc-pentapeptide onto the lipid carrier undecaprenyl phosphate, yielding undecaprenyl-pyrophosphoryl-MurNAc-pentapeptide, known as lipid I. This is Phospho-N-acetylmuramoyl-pentapeptide-transferase from Campylobacter jejuni subsp. jejuni serotype O:23/36 (strain 81-176).